The sequence spans 64 residues: Large ribosomal subunit protein bL35 (64 aa).

The disordered stretch occupies residues 1–56 (MPKMKSNKSVAARFKLTGSGQLKRTRPGKRHKLSKKSSQEKRNLSKQPLVDKGQVG). Over residues 23 to 35 (KRTRPGKRHKLSK) the composition is skewed to basic residues.

This sequence belongs to the bacterial ribosomal protein bL35 family.

This Chlamydia abortus (strain DSM 27085 / S26/3) (Chlamydophila abortus) protein is Large ribosomal subunit protein bL35.